An 875-amino-acid polypeptide reads, in one-letter code: Agglutinin-like protein 4 (875 aa).

Residues 1–17 (MLLQFLLLSLCVSVATA) form the signal peptide. Intrachain disulfides connect C73–C150, C96–C112, C205–C298, and C227–C256. ALS repeat units follow at residues 365–396 (TTIT…VDVP), 401–432 (TTVT…VQVP), 438–469 (VTTT…IREP), and 474–502 (VTTT…SVII). N542 carries N-linked (GlcNAc...) asparagine glycosylation. Disordered stretches follow at residues 546–580 (THLP…GSEN) and 619–837 (TTII…LSQQ). Low complexity predominate over residues 549–578 (PSSSSKPVDIPSSDVVTSTNDNSLTSLTGS). Residue N626 is glycosylated (N-linked (GlcNAc...) asparagine). A compositionally biased stretch (low complexity) spans 627-641 (GSGKSKSGELSSTGS). A compositionally biased stretch (polar residues) spans 674-715 (STETQTTNNVPGSPNIPATGTTDIRESTTVSHTVTGNGNTGV). Positions 722-746 (ALTTSTSLTGATNSATNPSHETGVN) are enriched in low complexity. Residues 755–764 (IVTPPSSATA) show a composition bias toward polar residues. N789 and N811 each carry an N-linked (GlcNAc...) asparagine glycan. Low complexity-rich tracts occupy residues 789-816 (NGST…TGEP) and 827-837 (SISQPTTLSQQ). D852 is lipidated: GPI-anchor amidated aspartate. The propeptide at 853–875 (GSGSIVQHSAWLYVLLTAISIFF) is removed in mature form.

Belongs to the ALS family. Post-translationally, N-glycosylated and O-glycosylated.

The protein localises to the cell membrane. Its subcellular location is the secreted. It is found in the cell wall. Its function is as follows. Cell surface adhesion protein which mediates both yeast-to-host tissue adherence and yeast aggregation. Plays an important role in the pathogenesis of C.albicans infections. The sequence is that of Agglutinin-like protein 4 (ALS4) from Candida albicans (Yeast).